The chain runs to 150 residues: Large ribosomal subunit protein bL9 (150 aa).

The protein belongs to the bacterial ribosomal protein bL9 family.

Its function is as follows. Binds to the 23S rRNA. The protein is Large ribosomal subunit protein bL9 of Pectobacterium atrosepticum (strain SCRI 1043 / ATCC BAA-672) (Erwinia carotovora subsp. atroseptica).